We begin with the raw amino-acid sequence, 604 residues long: Netrin-1 (604 aa).

Residues 1–24 (MMRAVWEALAALAAVACLVGAVRG) form the signal peptide. Residues 47–284 (HPRRCIPDFV…AVSDLQVGGR (238 aa)) form the Laminin N-terminal domain. N-linked (GlcNAc...) asparagine glycosylation is found at N95, N116, and N131. Intrachain disulfides connect C119–C152, C285–C294, C287–C304, C306–C315, C318–C338, C341–C350, C343–C368, C371–C380, C383–C401, C404–C416, C406–C423, C425–C434, C437–C451, C472–C544, and C491–C601. Laminin EGF-like domains follow at residues 285–340 (CKCN…ECVA), 341–403 (CNCN…ACKA), and 404–453 (CDCH…PCIK). N417 carries N-linked (GlcNAc...) asparagine glycosylation. The NTR domain occupies 472-601 (CDSYCKASKG…FQQREKKGKC (130 aa)). Positions 530–532 (RGD) match the Cell attachment site motif.

In terms of assembly, binds to its receptors; DCC, UNC5A, UNC5B, UNC5C and probably UNC5D. Binds to its receptor; DSCAM. Interacts with APP. As to expression, in the embryo, widely expressed in the developing nervous system and in mesodermal tissues.

The protein localises to the secreted. It is found in the cytoplasm. Its function is as follows. Netrins control guidance of CNS commissural axons and peripheral motor axons. Its association with either DCC or some UNC5 receptors will lead to axon attraction or repulsion, respectively. Binding to UNC5C might cause dissociation of UNC5C from polymerized TUBB3 in microtubules and thereby lead to increased microtubule dynamics and axon repulsion. Involved in dorsal root ganglion axon projection towards the spinal cord. It also serves as a survival factor via its association with its receptors which prevent the initiation of apoptosis. Involved in colorectal tumorigenesis by regulating apoptosis. This Mus musculus (Mouse) protein is Netrin-1 (Ntn1).